Consider the following 344-residue polypeptide: Geranylgeranyl transferase type-2 subunit alpha (344 aa).

PFTA repeat units lie at residues 44–78, 89–123, 125–159, 165–199, 214–248, and 266–293; these read YSEG…NDVF, LLDN…NAPY, NWNY…QIER, LAKK…TILN, ILEQ…HCNP, and YLQK…SLVN.

Belongs to the protein prenyltransferase subunit alpha family. Heterodimer of an alpha and a beta subunit.

It catalyses the reaction geranylgeranyl diphosphate + L-cysteinyl-[protein] = S-geranylgeranyl-L-cysteinyl-[protein] + diphosphate. Its function is as follows. Catalyzes the transfer of a geranyl-geranyl moiety from geranyl-geranyl pyrophosphate to proteins having the C-terminal-XCC or -XCXC, where both cysteines may become modified. This is Geranylgeranyl transferase type-2 subunit alpha (bet4) from Schizosaccharomyces pombe (strain 972 / ATCC 24843) (Fission yeast).